Reading from the N-terminus, the 300-residue chain is Protein SPEAR2 (300 aa).

Polar residues predominate over residues 1 to 11 (MCSNNNTSSGS). The tract at residues 1-64 (MCSNNNTSSG…PPLSSSPSLP (64 aa)) is disordered. The span at 25 to 38 (CRKKQKKDKVRRRG) shows a compositional bias: basic residues. The SPL motif lies at 37–45 (RGPGVAELE). Residues 43–54 (ELEKIRLQEEYK) are compositionally biased toward basic and acidic residues. Positions 55–64 (PPLSSSPSLP) are enriched in low complexity. An EAR motif is present at residues 294-300 (IDLNLKL).

Homodimer and heterodimer with SPL and SPEARs. Interacts with SPL, SPEAR1, SPEAR3 and SPEAR4. As to expression, expressed in leaves.

Adapter-like transcriptional repressor recruiting TPL/TPR corepressors to inhibit TCP transcription factors. May be involved in leaf development. The protein is Protein SPEAR2 of Arabidopsis thaliana (Mouse-ear cress).